The sequence spans 184 residues: MNFKTVISLFLVLFVSFVYCENGAELLFHKKIVEGPVVGKELPIQFIIYNVGSEPAYDISFIDNDFSNAEFEFVSGSSEGKWETLAPNSQVQTNLTVIPKKSGIYSLTSTVLNYRKTQTSSEFTVSSAASYSGMYVESQADYEKRTSLLIKEWITFFVLCAGAIALPYSISTYYKKNYENGIKK.

Positions 1–20 (MNFKTVISLFLVLFVSFVYC) are cleaved as a signal peptide. The Lumenal segment spans residues 21 to 147 (ENGAELLFHK…SQADYEKRTS (127 aa)). N-linked (GlcNAc...) asparagine glycosylation occurs at N94. The helical transmembrane segment at 148–168 (LLIKEWITFFVLCAGAIALPY) threads the bilayer. Residues 169-184 (SISTYYKKNYENGIKK) lie on the Cytoplasmic side of the membrane.

The protein belongs to the TRAP-beta family. Heterotrimer of TRAP-alpha, TRAP-beta and TRAP-gamma.

Its subcellular location is the endoplasmic reticulum membrane. Functionally, TRAP proteins are part of a complex whose function is to bind calcium to the ER membrane and thereby regulate the retention of ER resident proteins. In Dictyostelium discoideum (Social amoeba), this protein is Translocon-associated protein subunit beta (ssr2).